The primary structure comprises 344 residues: Nicotinate-nucleotide--dimethylbenzimidazole phosphoribosyltransferase (344 aa).

The active-site Proton acceptor is the glutamate 305.

Belongs to the CobT family.

It catalyses the reaction 5,6-dimethylbenzimidazole + nicotinate beta-D-ribonucleotide = alpha-ribazole 5'-phosphate + nicotinate + H(+). The protein operates within nucleoside biosynthesis; alpha-ribazole biosynthesis; alpha-ribazole from 5,6-dimethylbenzimidazole: step 1/2. Its function is as follows. Catalyzes the synthesis of alpha-ribazole-5'-phosphate from nicotinate mononucleotide (NAMN) and 5,6-dimethylbenzimidazole (DMB). The chain is Nicotinate-nucleotide--dimethylbenzimidazole phosphoribosyltransferase from Agrobacterium fabrum (strain C58 / ATCC 33970) (Agrobacterium tumefaciens (strain C58)).